A 679-amino-acid polypeptide reads, in one-letter code: DNA-directed RNA polymerase subunit beta' (679 aa).

Residues cysteine 69, cysteine 71, cysteine 84, and cysteine 87 each coordinate Zn(2+). Mg(2+)-binding residues include aspartate 486, aspartate 488, and aspartate 490.

Belongs to the RNA polymerase beta' chain family. RpoC1 subfamily. In plastids the minimal PEP RNA polymerase catalytic core is composed of four subunits: alpha, beta, beta', and beta''. When a (nuclear-encoded) sigma factor is associated with the core the holoenzyme is formed, which can initiate transcription. Mg(2+) is required as a cofactor. Zn(2+) serves as cofactor.

Its subcellular location is the plastid. The protein localises to the chloroplast. It catalyses the reaction RNA(n) + a ribonucleoside 5'-triphosphate = RNA(n+1) + diphosphate. In terms of biological role, DNA-dependent RNA polymerase catalyzes the transcription of DNA into RNA using the four ribonucleoside triphosphates as substrates. This chain is DNA-directed RNA polymerase subunit beta', found in Physcomitrium patens (Spreading-leaved earth moss).